Here is a 310-residue protein sequence, read N- to C-terminus: Beta-ketoacyl-[acyl-carrier-protein] synthase III (310 aa).

Catalysis depends on residues cysteine 112 and histidine 235. The interval 236–240 (QANIR) is ACP-binding. Asparagine 265 is an active-site residue.

It belongs to the thiolase-like superfamily. FabH family. Homodimer.

The protein resides in the cytoplasm. It carries out the reaction malonyl-[ACP] + acetyl-CoA + H(+) = 3-oxobutanoyl-[ACP] + CO2 + CoA. It participates in lipid metabolism; fatty acid biosynthesis. Catalyzes the condensation reaction of fatty acid synthesis by the addition to an acyl acceptor of two carbons from malonyl-ACP. Catalyzes the first condensation reaction which initiates fatty acid synthesis and may therefore play a role in governing the total rate of fatty acid production. Possesses both acetoacetyl-ACP synthase and acetyl transacylase activities. Its substrate specificity determines the biosynthesis of branched-chain and/or straight-chain of fatty acids. The chain is Beta-ketoacyl-[acyl-carrier-protein] synthase III from Geobacillus kaustophilus (strain HTA426).